A 550-amino-acid chain; its full sequence is CTP synthase (550 aa).

The tract at residues 1 to 272 is amidoligase domain; sequence MKTKFIFITG…DQKITSFLNL (272 aa). Position 14 (S14) interacts with CTP. S14 is a binding site for UTP. 15–20 is a binding site for ATP; sequence SLGKGL. Residue Y55 participates in L-glutamine binding. ATP is bound at residue D72. The Mg(2+) site is built by D72 and E146. CTP is bound by residues 153–155, 193–198, and K229; these read DIE and KTKPTQ. Residues 193–198 and K229 each bind UTP; that span reads KTKPTQ. The Glutamine amidotransferase type-1 domain occupies 297–550; the sequence is TITIVGKYVG…IHAACNHNKQ (254 aa). Residue G359 participates in L-glutamine binding. Residue C386 is the Nucleophile; for glutamine hydrolysis of the active site. L-glutamine contacts are provided by residues 387–390, E410, and R478; that span reads LGMQ. Active-site residues include H523 and E525.

It belongs to the CTP synthase family. In terms of assembly, homotetramer.

The catalysed reaction is UTP + L-glutamine + ATP + H2O = CTP + L-glutamate + ADP + phosphate + 2 H(+). It carries out the reaction L-glutamine + H2O = L-glutamate + NH4(+). The enzyme catalyses UTP + NH4(+) + ATP = CTP + ADP + phosphate + 2 H(+). The protein operates within pyrimidine metabolism; CTP biosynthesis via de novo pathway; CTP from UDP: step 2/2. With respect to regulation, allosterically activated by GTP, when glutamine is the substrate; GTP has no effect on the reaction when ammonia is the substrate. The allosteric effector GTP functions by stabilizing the protein conformation that binds the tetrahedral intermediate(s) formed during glutamine hydrolysis. Inhibited by the product CTP, via allosteric rather than competitive inhibition. Its function is as follows. Catalyzes the ATP-dependent amination of UTP to CTP with either L-glutamine or ammonia as the source of nitrogen. Regulates intracellular CTP levels through interactions with the four ribonucleotide triphosphates. The protein is CTP synthase of Lawsonia intracellularis (strain PHE/MN1-00).